A 447-amino-acid polypeptide reads, in one-letter code: MRFSLSPVRPHSVVVPSLPKQDVVSYISGTTSNRQCRCVLTLPSPSVSTSRPPVLPKPETWESLLLNHDQIPGEFSPTGSSIPVKLGRRWMEYQGLQNWDGLLDPLDDNLRREILRYGQFVESAYQAFDFDPSSPTYGTCRFPRSTLLERSGLPNSGYRLTKNLRATSGINLPRWIEKAPSWMATQSSWIGYVAVCQDKEEISRLGRRDVVISFRGTATCLEWLENLRATLTHLPNGPTGANLNGSNSGPMVESGFLSLYTSGVHSLRDMVREEIARLLQSYGDEPLSVTITGHSLGAAIATLAAYDIKTTFKRAPMVTVISFGGPRVGNRCFRKLLEKQGTKVLRIVNSDDVITKVPGVVLENREQDNVKMTASIMPSWIQRRVEETPWVYAEIGKELRLSSRDSPHLSSINVATCHELKTYLHLVDGFVSSTCPFRETARRVLHR.

The N-terminal 46 residues, 1–46 (MRFSLSPVRPHSVVVPSLPKQDVVSYISGTTSNRQCRCVLTLPSPS), are a transit peptide targeting the chloroplast. The GXSXG motif lies at 293–297 (GHSLG). The active-site Acyl-ester intermediate is S295. Catalysis depends on charge relay system residues D352 and H418.

Belongs to the AB hydrolase superfamily. Lipase family. Expressed in flower buds, but not in leaves or roots. Restricted to the stamen filaments immediately before flower opening.

It localises to the plastid. The protein resides in the chloroplast. The enzyme catalyses a 1,2-diacyl-sn-glycero-3-phosphocholine + H2O = a 2-acyl-sn-glycero-3-phosphocholine + a fatty acid + H(+). It carries out the reaction 1-hexadecanoyl-2-(9Z,12Z-octadecadienoyl)-sn-glycero-3-phosphocholine + H2O = 2-(9Z,12Z-octadecadienoyl)-sn-glycero-3-phosphocholine + hexadecanoate + H(+). Sn-1-specific phospholipase that releases free fatty acids from phospholipids. Low activity on galactolipids and triacylglycerols. Catalyzes the initial step of jasmonic acid biosynthesis. Not essential for jasmonate biosynthesis after wounding or upon pathogen infection. This chain is Phospholipase A(1) DAD1, chloroplastic, found in Arabidopsis thaliana (Mouse-ear cress).